Consider the following 122-residue polypeptide: uncharacterized protein (122 aa).

The first 18 residues, 1–18, serve as a signal peptide directing secretion; sequence MYSMAFLASSGLVANSSA. N-linked (GlcNAc...) asparagine glycosylation occurs at N15.

This is an uncharacterized protein from Saccharomyces cerevisiae (strain ATCC 204508 / S288c) (Baker's yeast).